Reading from the N-terminus, the 69-residue chain is Cytochrome c oxidase subunit 8A, mitochondrial (69 aa).

The N-terminal 25 residues, 1-25, are a transit peptide targeting the mitochondrion; sequence MYVVTPLLLRGLTGSARRLPVPRAQ. An SIFI-degron motif is present at residues 2–19; that stretch reads YVVTPLLLRGLTGSARRL. Residues 26 to 36 are Mitochondrial matrix-facing; it reads VHSMPPEQKLG. A helical transmembrane segment spans residues 37–60; the sequence is VLELAIGFTSCMVTFLLPAGWIMS. At 61 to 69 the chain is on the mitochondrial intermembrane side; that stretch reads HLESYKKRG.

Belongs to the cytochrome c oxidase VIII family. Component of the cytochrome c oxidase (complex IV, CIV), a multisubunit enzyme composed of 14 subunits. The complex is composed of a catalytic core of 3 subunits MT-CO1, MT-CO2 and MT-CO3, encoded in the mitochondrial DNA, and 11 supernumerary subunits COX4I, COX5A, COX5B, COX6A, COX6B, COX6C, COX7A, COX7B, COX7C, COX8 and NDUFA4, which are encoded in the nuclear genome. The complex exists as a monomer or a dimer and forms supercomplexes (SCs) in the inner mitochondrial membrane with NADH-ubiquinone oxidoreductase (complex I, CI) and ubiquinol-cytochrome c oxidoreductase (cytochrome b-c1 complex, complex III, CIII), resulting in different assemblies (supercomplex SCI(1)III(2)IV(1) and megacomplex MCI(2)III(2)IV(2)). Post-translationally, in response to mitochondrial stress, the precursor protein is ubiquitinated by the SIFI complex in the cytoplasm before mitochondrial import, leading to its degradation. Within the SIFI complex, UBR4 initiates ubiquitin chain that are further elongated or branched by KCMF1.

Its subcellular location is the mitochondrion inner membrane. The protein operates within energy metabolism; oxidative phosphorylation. Its function is as follows. Component of the cytochrome c oxidase, the last enzyme in the mitochondrial electron transport chain which drives oxidative phosphorylation. The respiratory chain contains 3 multisubunit complexes succinate dehydrogenase (complex II, CII), ubiquinol-cytochrome c oxidoreductase (cytochrome b-c1 complex, complex III, CIII) and cytochrome c oxidase (complex IV, CIV), that cooperate to transfer electrons derived from NADH and succinate to molecular oxygen, creating an electrochemical gradient over the inner membrane that drives transmembrane transport and the ATP synthase. Cytochrome c oxidase is the component of the respiratory chain that catalyzes the reduction of oxygen to water. Electrons originating from reduced cytochrome c in the intermembrane space (IMS) are transferred via the dinuclear copper A center (CU(A)) of subunit 2 and heme A of subunit 1 to the active site in subunit 1, a binuclear center (BNC) formed by heme A3 and copper B (CU(B)). The BNC reduces molecular oxygen to 2 water molecules using 4 electrons from cytochrome c in the IMS and 4 protons from the mitochondrial matrix. This Ateles belzebuth (White-bellied spider monkey) protein is Cytochrome c oxidase subunit 8A, mitochondrial (COX8A).